Reading from the N-terminus, the 203-residue chain is Na(+)-translocating NADH-quinone reductase subunit E (203 aa).

6 consecutive transmembrane segments (helical) span residues 11-31 (SIFIENMALSFFLGMCTFLAV), 35-55 (ISTAIGLGTAVIVVQTLTVPL), 82-102 (FLGLIAYIGVIAAVVQILEMF), 115-135 (GIFLPLITVNCAILAGSLFMV), 145-165 (MVYGVGSGVGWALAIAVMAGV), and 181-201 (LGITFITAGLMAIGFMSFSGI).

This sequence belongs to the NqrDE/RnfAE family. As to quaternary structure, composed of six subunits; NqrA, NqrB, NqrC, NqrD, NqrE and NqrF.

Its subcellular location is the cell inner membrane. It catalyses the reaction a ubiquinone + n Na(+)(in) + NADH + H(+) = a ubiquinol + n Na(+)(out) + NAD(+). NQR complex catalyzes the reduction of ubiquinone-1 to ubiquinol by two successive reactions, coupled with the transport of Na(+) ions from the cytoplasm to the periplasm. NqrA to NqrE are probably involved in the second step, the conversion of ubisemiquinone to ubiquinol. This chain is Na(+)-translocating NADH-quinone reductase subunit E, found in Dichelobacter nodosus (strain VCS1703A).